The chain runs to 347 residues: NADH-ubiquinone oxidoreductase chain 2 (347 aa).

11 helical membrane-spanning segments follow: residues 1–21 (MNPM…SIVM), 25–45 (HWFL…PVLM), 60–80 (FLTQ…NLMF), 96–116 (MLLT…FWVP), 127–147 (GLIL…QIYP), 149–169 (INTN…GWGG), 178–198 (IMAY…IYNP), 202–222 (LLNL…LIFA), 239–259 (IITI…PLTG), 274–294 (NSVI…FFYM), and 326–346 (MMPL…FILL).

Belongs to the complex I subunit 2 family. As to quaternary structure, core subunit of respiratory chain NADH dehydrogenase (Complex I) which is composed of 45 different subunits. Interacts with TMEM242.

It localises to the mitochondrion inner membrane. It catalyses the reaction a ubiquinone + NADH + 5 H(+)(in) = a ubiquinol + NAD(+) + 4 H(+)(out). Core subunit of the mitochondrial membrane respiratory chain NADH dehydrogenase (Complex I) that is believed to belong to the minimal assembly required for catalysis. Complex I functions in the transfer of electrons from NADH to the respiratory chain. The immediate electron acceptor for the enzyme is believed to be ubiquinone. The chain is NADH-ubiquinone oxidoreductase chain 2 from Suncus etruscus (Etruscan shrew).